Consider the following 323-residue polypeptide: Mortality factor 4-like protein 1 (323 aa).

Residues 12–62 form the Tudor-knot domain; that stretch reads QEGERVLCFHGPLLYEAKCVKVAIKDKQVKYFIHHSGWNKNWDEWVPESRV. Residues 76–143 form a disordered region; sequence LQKANQEQYA…RKKRARVDPT (68 aa). Residues 94–227 form a sufficient for interaction with SIN3A region; that stretch reads PGKKTSGLQQ…VAGIKEYFNV (134 aa). Positions 96 to 107 match the Nuclear localization signal motif; that stretch reads KKTSGLQQKNVD. Lysine 104 carries the N6-acetyllysine modification. The interval 125 to 191 is interaction with RB1-1; it reads STSETPQPPR…FYLPAKKNVD (67 aa). The tract at residues 149–303 is sufficient for interaction with PHF12; the sequence is TFMNRVEVKV…FLKYLAKNSA (155 aa). The MRG domain maps to 152-323; that stretch reads NRVEVKVKIP…APPEYHRKAV (172 aa). Residues 284–305 are interaction with RB1-2; that stretch reads LALLLNYLHDFLKYLAKNSATL.

As to quaternary structure, component of the NuA4 histone acetyltransferase complex which contains the catalytic subunit KAT5/TIP60 and the subunits EP400, TRRAP/PAF400, BRD8/SMAP, EPC1, DMAP1/DNMAP1, RUVBL1/TIP49, RUVBL2, ING3, actin, ACTL6A/BAF53A, MORF4L1/MRG15, MORF4L2/MRGX, MRGBP, YEATS4/GAS41, VPS72/YL1 and MEAF6. The NuA4 complex interacts with MYC and the adenovirus E1A protein. MORF4L1 may also participate in the formation of NuA4 related complexes which lack the KAT5/TIP60 catalytic subunit, but which include the SWI/SNF related protein SRCAP. Component of the mSin3A histone deacetylase complex, which includes SIN3A, HDAC2, ARID4B, MORF4L1, RBBP4/RbAp48, and RBBP7/RbAp46. May also interact with PHF12 and one or more as yet undefined members of the TLE (transducin-like enhancer of split) family of transcriptional repressors. Component of the SIN3B complex, which includes SIN3B, HDAC2 or HDAC1, PHF12 and MORF4L1. Interacts with RB1 and KAT8. Interacts with the N-terminus of MRFAP1. Found in a complex composed of MORF4L1, MRFAP1 and RB1. Interacts with the entire BRCA complex, which contains BRCA1, PALB2, BRCA2 and RAD51. Interacts with PALB2. Forms a complex with MSL1 and NUPR1.

It localises to the nucleus. Its function is as follows. Component of the NuA4 histone acetyltransferase (HAT) complex which is involved in transcriptional activation of select genes principally by acetylation of nucleosomal histones H4 and H2A. This modification may both alter nucleosome - DNA interactions and promote interaction of the modified histones with other proteins which positively regulate transcription. This complex may be required for the activation of transcriptional programs associated with oncogene and proto-oncogene mediated growth induction, tumor suppressor mediated growth arrest and replicative senescence, apoptosis, and DNA repair. The NuA4 complex ATPase and helicase activities seem to be, at least in part, contributed by the association of RUVBL1 and RUVBL2 with EP400. NuA4 may also play a direct role in DNA repair when directly recruited to sites of DNA damage. As part of the SIN3B complex represses transcription and counteracts the histone acetyltransferase activity of EP300 through the recognition H3K27ac marks by PHF12 and the activity of the histone deacetylase HDAC2. SIN3B complex is recruited downstream of the constitutively active genes transcriptional start sites through interaction with histones and mitigates histone acetylation and RNA polymerase II progression within transcribed regions contributing to the regulation of transcription. Required for homologous recombination repair (HRR) and resistance to mitomycin C (MMC). Involved in the localization of PALB2, BRCA2 and RAD51, but not BRCA1, to DNA-damage foci. This chain is Mortality factor 4-like protein 1 (MORF4L1), found in Pongo abelii (Sumatran orangutan).